The following is a 110-amino-acid chain: UPF0060 membrane protein Noc_2955 (110 aa).

The next 4 membrane-spanning stretches (helical) occupy residues 7–27, 33–53, 63–83, and 87–107; these read VGLF…AYLW, TIWL…LLSL, AAYG…VNGI, and TWDL…MFAP.

This sequence belongs to the UPF0060 family.

It is found in the cell inner membrane. The polypeptide is UPF0060 membrane protein Noc_2955 (Nitrosococcus oceani (strain ATCC 19707 / BCRC 17464 / JCM 30415 / NCIMB 11848 / C-107)).